Here is a 98-residue protein sequence, read N- to C-terminus: NADH-ubiquinone oxidoreductase chain 4L (98 aa).

The next 3 membrane-spanning stretches (helical) occupy residues Pro-2–Phe-22, Leu-26–Val-46, and Pro-58–Val-79.

It belongs to the complex I subunit 4L family. In terms of assembly, core subunit of respiratory chain NADH dehydrogenase (Complex I) which is composed of 45 different subunits.

The protein resides in the mitochondrion inner membrane. The catalysed reaction is a ubiquinone + NADH + 5 H(+)(in) = a ubiquinol + NAD(+) + 4 H(+)(out). In terms of biological role, core subunit of the mitochondrial membrane respiratory chain NADH dehydrogenase (Complex I) which catalyzes electron transfer from NADH through the respiratory chain, using ubiquinone as an electron acceptor. Part of the enzyme membrane arm which is embedded in the lipid bilayer and involved in proton translocation. This chain is NADH-ubiquinone oxidoreductase chain 4L, found in Mus musculus (Mouse).